The following is a 211-amino-acid chain: tRNA (guanine-N(7)-)-methyltransferase (211 aa).

4 residues coordinate S-adenosyl-L-methionine: glutamate 43, glutamate 68, aspartate 95, and aspartate 117. Residue aspartate 117 is part of the active site. Substrate is bound by residues lysine 121, aspartate 153, and 190-193 (TEYE).

Belongs to the class I-like SAM-binding methyltransferase superfamily. TrmB family.

It catalyses the reaction guanosine(46) in tRNA + S-adenosyl-L-methionine = N(7)-methylguanosine(46) in tRNA + S-adenosyl-L-homocysteine. It functions in the pathway tRNA modification; N(7)-methylguanine-tRNA biosynthesis. Its function is as follows. Catalyzes the formation of N(7)-methylguanine at position 46 (m7G46) in tRNA. This Staphylococcus carnosus (strain TM300) protein is tRNA (guanine-N(7)-)-methyltransferase.